A 412-amino-acid polypeptide reads, in one-letter code: Probable serine/threonine-protein kinase PBL10 (412 aa).

The N-myristoyl glycine moiety is linked to residue Gly-2. Cys-4 is lipidated: S-palmitoyl cysteine. The interval 15-45 (GASPKYMSSEANDSLGSKSSSVSIRTNPRTE) is disordered. Polar residues predominate over residues 23 to 43 (SEANDSLGSKSSSVSIRTNPR). Thr-58 carries the phosphothreonine modification. In terms of domain architecture, Protein kinase spans 69–356 (FRPDSVLGEG…VVSHLEHIQT (288 aa)). Residues 75-83 (LGEGGFGSV) and Lys-107 each bind ATP. Position 152 is a phosphotyrosine (Tyr-152). The Proton acceptor role is filled by Asp-204. Phosphoserine occurs at positions 208 and 238. Residues Thr-239 and Thr-244 each carry the phosphothreonine modification. A Phosphotyrosine modification is found at Tyr-252.

Belongs to the protein kinase superfamily. Ser/Thr protein kinase family. In terms of assembly, interacts with the Xanthomonas campestris effector XopAC/AvrAC. As to expression, expressed in stomatal guard cells of leaves.

Its subcellular location is the cell membrane. The enzyme catalyses L-seryl-[protein] + ATP = O-phospho-L-seryl-[protein] + ADP + H(+). It catalyses the reaction L-threonyl-[protein] + ATP = O-phospho-L-threonyl-[protein] + ADP + H(+). Its function is as follows. Possible bi-functional kinase. In vitro, it exhibits serine/threonine activity. In vivo, can phosphorylate tyrosine residues of limited substrates. May be involved in plant defense signaling. Required for full light-induced stomatal opening. In Arabidopsis thaliana (Mouse-ear cress), this protein is Probable serine/threonine-protein kinase PBL10.